The chain runs to 256 residues: Thiazole synthase (256 aa).

Residue K95 is the Schiff-base intermediate with DXP of the active site. Residues G156, 182–183 (AG), and 204–205 (NT) each bind 1-deoxy-D-xylulose 5-phosphate.

It belongs to the ThiG family. Homotetramer. Forms heterodimers with either ThiH or ThiS.

Its subcellular location is the cytoplasm. The enzyme catalyses [ThiS sulfur-carrier protein]-C-terminal-Gly-aminoethanethioate + 2-iminoacetate + 1-deoxy-D-xylulose 5-phosphate = [ThiS sulfur-carrier protein]-C-terminal Gly-Gly + 2-[(2R,5Z)-2-carboxy-4-methylthiazol-5(2H)-ylidene]ethyl phosphate + 2 H2O + H(+). Its pathway is cofactor biosynthesis; thiamine diphosphate biosynthesis. Functionally, catalyzes the rearrangement of 1-deoxy-D-xylulose 5-phosphate (DXP) to produce the thiazole phosphate moiety of thiamine. Sulfur is provided by the thiocarboxylate moiety of the carrier protein ThiS. In vitro, sulfur can be provided by H(2)S. In Salmonella typhi, this protein is Thiazole synthase.